We begin with the raw amino-acid sequence, 340 residues long: Gigasin-2 (340 aa).

Residues 1 to 21 (MNKMSPLYVLALCCLATTVFA) form the signal peptide. EGF-like domains follow at residues 22-57 (KYDC…EDCG) and 65-97 (TAAN…DMCE). 6 disulfide bridges follow: C25–C39, C33–C45, C47–C56, C69–C79, C73–C85, and C87–C96.

Component of the organic matrix of calcified shell layers.

The sequence is that of Gigasin-2 from Magallana gigas (Pacific oyster).